Reading from the N-terminus, the 661-residue chain is Zeaxanthin epoxidase, chloroplastic (661 aa).

A chloroplast-targeting transit peptide spans Met1–Ser50. Residues Arg82–Glu110 and Ile360–Asp373 each bind FAD. One can recognise an FHA domain in the interval Cys558–Ile607.

FAD is required as a cofactor.

The protein localises to the plastid. The protein resides in the chloroplast. The enzyme catalyses all-trans-zeaxanthin + 4 reduced [2Fe-2S]-[ferredoxin] + 2 O2 + 4 H(+) = all-trans-violaxanthin + 4 oxidized [2Fe-2S]-[ferredoxin] + 2 H2O. It functions in the pathway plant hormone biosynthesis; abscisate biosynthesis. In terms of biological role, converts zeaxanthin into antheraxanthin and subsequently violaxanthin. Involved in the epoxidation of zeaxanthin. This chain is Zeaxanthin epoxidase, chloroplastic, found in Prunus armeniaca (Apricot).